The primary structure comprises 368 residues: tRNA-specific 2-thiouridylase MnmA (368 aa).

ATP is bound by residues A10 to S17 and M36. C108 functions as the Nucleophile in the catalytic mechanism. A disulfide bridge links C108 with C206. G132 serves as a coordination point for ATP. The interval K156–Q158 is interaction with tRNA. The active-site Cysteine persulfide intermediate is C206. An interaction with tRNA region spans residues R312 to Y313.

Belongs to the MnmA/TRMU family.

It is found in the cytoplasm. It carries out the reaction S-sulfanyl-L-cysteinyl-[protein] + uridine(34) in tRNA + AH2 + ATP = 2-thiouridine(34) in tRNA + L-cysteinyl-[protein] + A + AMP + diphosphate + H(+). In terms of biological role, catalyzes the 2-thiolation of uridine at the wobble position (U34) of tRNA, leading to the formation of s(2)U34. The protein is tRNA-specific 2-thiouridylase MnmA of Natranaerobius thermophilus (strain ATCC BAA-1301 / DSM 18059 / JW/NM-WN-LF).